A 233-amino-acid chain; its full sequence is Cytidylate kinase (233 aa).

15–23 is a binding site for ATP; the sequence is GPSGAGKSS.

Belongs to the cytidylate kinase family. Type 1 subfamily.

The protein localises to the cytoplasm. It carries out the reaction CMP + ATP = CDP + ADP. The enzyme catalyses dCMP + ATP = dCDP + ADP. The chain is Cytidylate kinase from Citrifermentans bemidjiense (strain ATCC BAA-1014 / DSM 16622 / JCM 12645 / Bem) (Geobacter bemidjiensis).